A 465-amino-acid chain; its full sequence is Lipase 10 (465 aa).

The first 16 residues, 1–16 (MKTLLIFLAFLSSIFA), serve as a signal peptide directing secretion. A disulfide bridge links Cys-112 with Cys-285. The active-site Charge relay system is the Ser-196. N-linked (GlcNAc...) asparagine glycans are attached at residues Asn-231 and Asn-319. Residues Asp-348 and His-381 each act as charge relay system in the active site. Cys-364 and Cys-409 are oxidised to a cystine.

It belongs to the AB hydrolase superfamily. Lipase family. Class Lip subfamily.

The protein localises to the secreted. The enzyme catalyses a triacylglycerol + H2O = a diacylglycerol + a fatty acid + H(+). In terms of biological role, secreted lipase that is able to hydrolyze both the neutral triacylglycerols and the monopalmitate ester Tween 40, allowing the use of hydrolyzed products as carbon sources. Has broad lipolytic activity, which may be important for colonization and subsequent infection, therefore contributing to the persistence and virulence in human tissue. This is Lipase 10 from Candida albicans (strain SC5314 / ATCC MYA-2876) (Yeast).